The chain runs to 368 residues: Glutamate 5-kinase (368 aa).

Lysine 9 contributes to the ATP binding site. Substrate-binding residues include serine 49, aspartate 136, and asparagine 148. ATP-binding positions include 168-169 (TD) and 210-216 (TGGMMTK). The PUA domain occupies 275–353 (AGIITIDNGA…ADIENVLGYE (79 aa)).

The protein belongs to the glutamate 5-kinase family.

Its subcellular location is the cytoplasm. It carries out the reaction L-glutamate + ATP = L-glutamyl 5-phosphate + ADP. It functions in the pathway amino-acid biosynthesis; L-proline biosynthesis; L-glutamate 5-semialdehyde from L-glutamate: step 1/2. Its function is as follows. Catalyzes the transfer of a phosphate group to glutamate to form L-glutamate 5-phosphate. This is Glutamate 5-kinase from Haemophilus influenzae (strain ATCC 51907 / DSM 11121 / KW20 / Rd).